The chain runs to 381 residues: Actin-binding Rho-activating protein (381 aa).

2 disordered regions span residues 39 to 156 and 179 to 207; these read ENSI…SHGS and QEEP…PEQD. Over residues 69-79 the composition is skewed to polar residues; it reads PTSHQKAQSAP. A compositionally biased stretch (basic and acidic residues) spans 97-110; the sequence is KAPEVSHIKKKEVS. Phosphoserine is present on residues S156 and S188. Residues 179–188 show a composition bias toward basic and acidic residues; sequence QEEPTWRSDS. 2 actin-binding regions span residues 199-299 and 300-381; these read EAEE…AERA and KRAE…TLLK. Interaction with actin regions lie at residues 240–285 and 352–381; these read SPVG…GDEG and MRAR…TLLK.

In terms of assembly, binds F-actin and ABLIM1, ABLIM2 and ABLIM3. Interaction with ABLIM2 and ABLIM3 enhances activity.

The protein localises to the cytoplasm. Its subcellular location is the myofibril. It localises to the sarcomere. It is found in the cytoskeleton. Its function is as follows. Acts as an activator of serum response factor (SRF)-dependent transcription possibly by inducing nuclear translocation of MKL1 or MKL2 and through a mechanism requiring Rho-actin signaling. The sequence is that of Actin-binding Rho-activating protein from Homo sapiens (Human).